The primary structure comprises 239 residues: Methylthioribulose-1-phosphate dehydratase (239 aa).

C94 contacts substrate. H112 and H114 together coordinate Zn(2+). The active-site Proton donor/acceptor is the E136. H192 provides a ligand contact to Zn(2+).

It belongs to the aldolase class II family. MtnB subfamily. The cofactor is Zn(2+).

The protein localises to the cytoplasm. The catalysed reaction is 5-(methylsulfanyl)-D-ribulose 1-phosphate = 5-methylsulfanyl-2,3-dioxopentyl phosphate + H2O. It functions in the pathway amino-acid biosynthesis; L-methionine biosynthesis via salvage pathway; L-methionine from S-methyl-5-thio-alpha-D-ribose 1-phosphate: step 2/6. Catalyzes the dehydration of methylthioribulose-1-phosphate (MTRu-1-P) into 2,3-diketo-5-methylthiopentyl-1-phosphate (DK-MTP-1-P). Functions in the methionine salvage pathway. May play a role in apoptosis. This Aquarana catesbeiana (American bullfrog) protein is Methylthioribulose-1-phosphate dehydratase.